Here is a 459-residue protein sequence, read N- to C-terminus: Ribulose bisphosphate carboxylase large chain (459 aa).

Positions 1–2 are excised as a propeptide; sequence MS. Pro3 is subject to N-acetylproline. Lys14 bears the N6,N6,N6-trimethyllysine mark. 2 residues coordinate substrate: Xaa123 and Thr173. Lys175 serves as the catalytic Proton acceptor. Residue Lys177 coordinates substrate. Lys201, Asp203, and Glu204 together coordinate Mg(2+). Lys201 carries the post-translational modification N6-carboxylysine. His294 (proton acceptor) is an active-site residue. Substrate-binding residues include Arg295, His327, and Ser379.

It belongs to the RuBisCO large chain family. Type I subfamily. As to quaternary structure, heterohexadecamer of 8 large chains and 8 small chains; disulfide-linked. The disulfide link is formed within the large subunit homodimers. Requires Mg(2+) as cofactor. In terms of processing, the disulfide bond which can form in the large chain dimeric partners within the hexadecamer appears to be associated with oxidative stress and protein turnover.

It localises to the plastid. The protein resides in the chloroplast. The catalysed reaction is 2 (2R)-3-phosphoglycerate + 2 H(+) = D-ribulose 1,5-bisphosphate + CO2 + H2O. It catalyses the reaction D-ribulose 1,5-bisphosphate + O2 = 2-phosphoglycolate + (2R)-3-phosphoglycerate + 2 H(+). In terms of biological role, ruBisCO catalyzes two reactions: the carboxylation of D-ribulose 1,5-bisphosphate, the primary event in carbon dioxide fixation, as well as the oxidative fragmentation of the pentose substrate in the photorespiration process. Both reactions occur simultaneously and in competition at the same active site. This Corynocarpus laevigatus (New Zealand laurel) protein is Ribulose bisphosphate carboxylase large chain.